The following is a 343-amino-acid chain: Selenide, water dikinase (343 aa).

Residue Sec16 is part of the active site. Sec16 is a non-standard amino acid (selenocysteine). Residues Lys19 and 46–48 (GAE) contribute to the ATP site. Asp49 serves as a coordination point for Mg(2+). ATP-binding positions include Asp66, Asp89, and 137–139 (GHT). Asp89 provides a ligand contact to Mg(2+). Residue Asp225 participates in Mg(2+) binding.

The protein belongs to the selenophosphate synthase 1 family. Class I subfamily. As to quaternary structure, homodimer. Requires Mg(2+) as cofactor.

The catalysed reaction is hydrogenselenide + ATP + H2O = selenophosphate + AMP + phosphate + 2 H(+). In terms of biological role, synthesizes selenophosphate from selenide and ATP. The protein is Selenide, water dikinase of Geobacter sp. (strain M21).